We begin with the raw amino-acid sequence, 75 residues long: Small ribosomal subunit protein bS18 (75 aa).

Belongs to the bacterial ribosomal protein bS18 family. In terms of assembly, part of the 30S ribosomal subunit. Forms a tight heterodimer with protein bS6.

Its function is as follows. Binds as a heterodimer with protein bS6 to the central domain of the 16S rRNA, where it helps stabilize the platform of the 30S subunit. The polypeptide is Small ribosomal subunit protein bS18 (Thermotoga sp. (strain RQ2)).